A 248-amino-acid chain; its full sequence is 3-deoxy-manno-octulosonate cytidylyltransferase (248 aa).

Belongs to the KdsB family.

The protein localises to the cytoplasm. The enzyme catalyses 3-deoxy-alpha-D-manno-oct-2-ulosonate + CTP = CMP-3-deoxy-beta-D-manno-octulosonate + diphosphate. It participates in nucleotide-sugar biosynthesis; CMP-3-deoxy-D-manno-octulosonate biosynthesis; CMP-3-deoxy-D-manno-octulosonate from 3-deoxy-D-manno-octulosonate and CTP: step 1/1. The protein operates within bacterial outer membrane biogenesis; lipopolysaccharide biosynthesis. Its function is as follows. Activates KDO (a required 8-carbon sugar) for incorporation into bacterial lipopolysaccharide in Gram-negative bacteria. This is 3-deoxy-manno-octulosonate cytidylyltransferase from Chlorobium phaeobacteroides (strain BS1).